Reading from the N-terminus, the 412-residue chain is Non-specific lipid-transfer protein-like 2 (412 aa).

The Microbody targeting signal motif lies at 410 to 412 (SKI).

This sequence belongs to the thiolase-like superfamily. Thiolase family. Expressed in intestine, hypodermis and body-wall muscle.

The protein resides in the peroxisome. The catalysed reaction is choloyl-CoA + propanoyl-CoA = 3alpha,7alpha,12alpha-trihydroxy-24-oxo-5beta-cholestan-26-oyl-CoA + CoA. Its activity is regulated as follows. Inhibited by acetyl-CoA. Functionally, catalyzes the thiolytic cleavage of 3-ketoacyl-CoA with 8-16 carbon residues in the acyl group using a ping-pong mechanism whereby binding to 3-ketooctanoyl-CoA results in the release of acetyl-CoA and the subsequent addition of CoA produces 3-ketohexanohyl-CoA. Involved in the biosynthesis of the dauer pheromone by providing short chains of fatty acid that are attached to the ascarylose sugars of the pheromone. In Caenorhabditis elegans, this protein is Non-specific lipid-transfer protein-like 2.